The primary structure comprises 368 residues: Zinc finger protein 24 (368 aa).

A Glycyl lysine isopeptide (Lys-Gly) (interchain with G-Cter in SUMO2) cross-link involves residue Lys-22. A Glycyl lysine isopeptide (Lys-Gly) (interchain with G-Cter in SUMO1); alternate cross-link involves residue Lys-27. A Glycyl lysine isopeptide (Lys-Gly) (interchain with G-Cter in SUMO2); alternate cross-link involves residue Lys-27. The region spanning 52–134 is the SCAN box domain; it reads RQRFRQFGYQ…TVLEDLESEL (83 aa). Phosphoserine occurs at positions 132 and 142. Residues Lys-147, Lys-177, and Lys-236 each participate in a glycyl lysine isopeptide (Lys-Gly) (interchain with G-Cter in SUMO2) cross-link. A C2H2-type 1 zinc finger spans residues 251 to 273; the sequence is HICDECGKHFSQGSALILHQRIH. The segment at 251 to 301 is necessary and sufficient for nuclear localization; that stretch reads HICDECGKHFSQGSALILHQRIHSGEKPYGCVECGKAFSRSSILVQHQRVH. Ser-274 is modified (phosphoserine). Residues Lys-277 and Lys-286 each participate in a glycyl lysine isopeptide (Lys-Gly) (interchain with G-Cter in SUMO2) cross-link. C2H2-type zinc fingers lie at residues 279–301, 307–329, and 335–357; these read YGCV…QRVH, YKCL…QRIH, and YECV…QRRH. Ser-292 is subject to Phosphoserine. Position 335 is a phosphotyrosine (Tyr-335). Residues Lys-361 and Lys-367 each participate in a glycyl lysine isopeptide (Lys-Gly) (interchain with G-Cter in SUMO2) cross-link.

It belongs to the krueppel C2H2-type zinc-finger protein family. Sumoylated.

The protein localises to the nucleus. In terms of biological role, transcription factor required for myelination of differentiated oligodendrocytes. Required for the conversion of oligodendrocytes from the premyelinating to the myelinating state. In the developing central nervous system (CNS), involved in the maintenance in the progenitor stage by promoting the cell cycle. Specifically binds to the 5'-TCAT-3' DNA sequence. Has transcription repressor activity in vitro. This is Zinc finger protein 24 (Znf24) from Rattus norvegicus (Rat).